Reading from the N-terminus, the 193-residue chain is Ion-translocating oxidoreductase complex subunit A (193 aa).

The next 6 helical transmembrane spans lie at 5-25, 47-67, 72-92, 102-122, 134-154, and 171-191; these read LLLFIGTVLVNNFVLVKFLGL, FVITLASICAWLVNHLILLPL, LRTMAYILVIAVVVQFTEMVV, LLGIFLPLITTNCAVLGVPLL, AIYGFSASIGFSLVMVLFAGV, and SIALVTAGLMALAFMGFAGLV.

Belongs to the NqrDE/RnfAE family. In terms of assembly, the complex is composed of six subunits: RnfA, RnfB, RnfC, RnfD, RnfE and RnfG.

It localises to the cell inner membrane. Part of a membrane-bound complex that couples electron transfer with translocation of ions across the membrane. This is Ion-translocating oxidoreductase complex subunit A from Erwinia tasmaniensis (strain DSM 17950 / CFBP 7177 / CIP 109463 / NCPPB 4357 / Et1/99).